We begin with the raw amino-acid sequence, 151 residues long: Ribosome maturation factor RimP (151 aa).

Belongs to the RimP family.

The protein localises to the cytoplasm. In terms of biological role, required for maturation of 30S ribosomal subunits. The chain is Ribosome maturation factor RimP from Thermoanaerobacter pseudethanolicus (strain ATCC 33223 / 39E) (Clostridium thermohydrosulfuricum).